We begin with the raw amino-acid sequence, 446 residues long: MADRTEQILTPSQLNTLARDLLEGSFPLVWVEAELGNVTRPASGHLYFTLKDARAQIRCAMFKPKSTWLKFQPREGLRVLARGRLTLYEARGDYQLVLDHMEEAGEGALRRAFEELRARLAAEGVFDAERKQPLPAHVRRLAVITSPSGAAVRDVLSVLARRFPLLEVDILPSLVQGDSAAAQITSLLQRADASGRYDVILITRGGGSLEDLWAFNDERLARAIAAAHTPVVSAVGHETDVSLSDFAADVRAPTPSVAAELLVPDQRELVARVRRAQARLSQLQQHTLGQAMQHADRLALRLRARSPQARPQLLQRRQEDAARHLRARMQHILERLQARVQRAQAGVQSHSPQRHLAPLQQRLRAAHPQAAMQRRLQQDHLHLRGLVRSLEAVSPLATVARGYAIVTRQADGSVVRSAAELTQGDRLRAQLADGSVTVVVDTSETG.

It belongs to the XseA family. As to quaternary structure, heterooligomer composed of large and small subunits.

Its subcellular location is the cytoplasm. The enzyme catalyses Exonucleolytic cleavage in either 5'- to 3'- or 3'- to 5'-direction to yield nucleoside 5'-phosphates.. Bidirectionally degrades single-stranded DNA into large acid-insoluble oligonucleotides, which are then degraded further into small acid-soluble oligonucleotides. This is Exodeoxyribonuclease 7 large subunit from Xanthomonas campestris pv. campestris (strain B100).